Reading from the N-terminus, the 474-residue chain is tRNA-2-methylthio-N(6)-dimethylallyladenosine synthase (474 aa).

The region spanning Lys-3–Gly-120 is the MTTase N-terminal domain. 6 residues coordinate [4Fe-4S] cluster: Cys-12, Cys-49, Cys-83, Cys-157, Cys-161, and Cys-164. Positions Arg-143–Ala-375 constitute a Radical SAM core domain. One can recognise a TRAM domain in the interval Arg-378 to Arg-441.

It belongs to the methylthiotransferase family. MiaB subfamily. In terms of assembly, monomer. Requires [4Fe-4S] cluster as cofactor.

The protein localises to the cytoplasm. The catalysed reaction is N(6)-dimethylallyladenosine(37) in tRNA + (sulfur carrier)-SH + AH2 + 2 S-adenosyl-L-methionine = 2-methylsulfanyl-N(6)-dimethylallyladenosine(37) in tRNA + (sulfur carrier)-H + 5'-deoxyadenosine + L-methionine + A + S-adenosyl-L-homocysteine + 2 H(+). Functionally, catalyzes the methylthiolation of N6-(dimethylallyl)adenosine (i(6)A), leading to the formation of 2-methylthio-N6-(dimethylallyl)adenosine (ms(2)i(6)A) at position 37 in tRNAs that read codons beginning with uridine. This chain is tRNA-2-methylthio-N(6)-dimethylallyladenosine synthase, found in Shigella boydii serotype 4 (strain Sb227).